We begin with the raw amino-acid sequence, 363 residues long: UDP-N-acetylglucosamine--N-acetylmuramyl-(pentapeptide) pyrophosphoryl-undecaprenol N-acetylglucosamine transferase (363 aa).

UDP-N-acetyl-alpha-D-glucosamine is bound by residues 14 to 16 (TGG), Arg171, Ser200, and Gln290.

It belongs to the glycosyltransferase 28 family. MurG subfamily.

The protein localises to the cell inner membrane. It carries out the reaction di-trans,octa-cis-undecaprenyl diphospho-N-acetyl-alpha-D-muramoyl-L-alanyl-D-glutamyl-meso-2,6-diaminopimeloyl-D-alanyl-D-alanine + UDP-N-acetyl-alpha-D-glucosamine = di-trans,octa-cis-undecaprenyl diphospho-[N-acetyl-alpha-D-glucosaminyl-(1-&gt;4)]-N-acetyl-alpha-D-muramoyl-L-alanyl-D-glutamyl-meso-2,6-diaminopimeloyl-D-alanyl-D-alanine + UDP + H(+). It participates in cell wall biogenesis; peptidoglycan biosynthesis. Functionally, cell wall formation. Catalyzes the transfer of a GlcNAc subunit on undecaprenyl-pyrophosphoryl-MurNAc-pentapeptide (lipid intermediate I) to form undecaprenyl-pyrophosphoryl-MurNAc-(pentapeptide)GlcNAc (lipid intermediate II). The protein is UDP-N-acetylglucosamine--N-acetylmuramyl-(pentapeptide) pyrophosphoryl-undecaprenol N-acetylglucosamine transferase of Borreliella afzelii (strain PKo) (Borrelia afzelii).